The primary structure comprises 83 residues: Cytochrome b559 subunit alpha (83 aa).

A helical membrane pass occupies residues 21–35 (VIHSITIPSLFIAGW). His23 contributes to the heme binding site.

It belongs to the PsbE/PsbF family. Heterodimer of an alpha subunit and a beta subunit. PSII is composed of 1 copy each of membrane proteins PsbA, PsbB, PsbC, PsbD, PsbE, PsbF, PsbH, PsbI, PsbJ, PsbK, PsbL, PsbM, PsbT, PsbX, PsbY, PsbZ, Psb30/Ycf12, at least 3 peripheral proteins of the oxygen-evolving complex and a large number of cofactors. It forms dimeric complexes. Heme b is required as a cofactor.

Its subcellular location is the plastid. The protein resides in the chloroplast thylakoid membrane. Its function is as follows. This b-type cytochrome is tightly associated with the reaction center of photosystem II (PSII). PSII is a light-driven water:plastoquinone oxidoreductase that uses light energy to abstract electrons from H(2)O, generating O(2) and a proton gradient subsequently used for ATP formation. It consists of a core antenna complex that captures photons, and an electron transfer chain that converts photonic excitation into a charge separation. This chain is Cytochrome b559 subunit alpha, found in Chara vulgaris (Common stonewort).